The chain runs to 85 residues: Large ribosomal subunit protein bL27 (85 aa).

The protein belongs to the bacterial ribosomal protein bL27 family.

The protein is Large ribosomal subunit protein bL27 of Variovorax paradoxus (strain S110).